Consider the following 366-residue polypeptide: Galactoside alpha-(1,2)-fucosyltransferase 1 (366 aa).

At 1–8 (MWPPSHRQ) the chain is on the cytoplasmic side. Residues 9–25 (LCRAFLLVCVFSVISFF) form a helical; Signal-anchor for type II membrane protein membrane-spanning segment. The Lumenal segment spans residues 26–366 (LHIHQDSFPH…LSPLWTLAKP (341 aa)). 3 N-linked (GlcNAc...) asparagine glycosylation sites follow: Asn-66, Asn-302, and Asn-328.

It belongs to the glycosyltransferase 11 family.

The protein resides in the golgi apparatus. Its subcellular location is the golgi stack membrane. It carries out the reaction a beta-D-galactosyl-(1-&gt;4)-N-acetyl-beta-D-glucosaminyl derivative + GDP-beta-L-fucose = an alpha-L-Fuc-(1-&gt;2)-beta-D-Gal-(1-&gt;4)-beta-D-GlcNAc derivative + GDP + H(+). The enzyme catalyses a ganglioside GA1 + GDP-beta-L-fucose = a ganglioside Fuc-GA1 + GDP + H(+). It catalyses the reaction a beta-D-Gal-(1-&gt;3)-beta-D-GlcNAc-(1-&gt;3)-beta-D-Gal-(1-&gt;4)-beta-D-Glc-(1&lt;-&gt;1')-Cer(d18:1(4E)) + GDP-beta-L-fucose = alpha-L-fucosyl-(1-&gt;2)- beta-D-galactosyl-(1-&gt;3)-N-acetyl-beta-D-glucosaminyl-(1-&gt;3)-beta-D-galactosyl-(1-&gt;4)-beta-D-glucosyl-(1&lt;-&gt;1')-N-acylsphing-4-enine + GDP + H(+). The catalysed reaction is a neolactoside nLc4Cer(d18:1(4E)) + GDP-beta-L-fucose = a neolactoside IV(2)-alpha-Fuc-nLc4Cer(d18:1(4E)) + GDP + H(+). It carries out the reaction a ganglioside GM1 + GDP-beta-L-fucose = a ganglioside Fuc-GM1 + GDP + H(+). The enzyme catalyses beta-D-galactosyl-(1-&gt;3)-N-acetyl-D-galactosamine + GDP-beta-L-fucose = alpha-L-fucosyl-(1-&gt;2)-beta-D-galactosyl-(1-&gt;3)-N-acetyl-D-galactosamine + GDP + H(+). The protein operates within protein modification; protein glycosylation. In terms of biological role, catalyzes the transfer of L-fucose, from a guanosine diphosphate-beta-L-fucose, to the terminal galactose residue of glycoconjugates through an alpha(1,2) linkage leading to H antigen synthesis that is an intermediate substrate in the synthesis of ABO blood group antigens. H antigen is essential for maturation of the glomerular layer of the main olfactory bulb, in cell migration and early cell-cell contacts during tumor associated angiogenesis. Preferentially fucosylates soluble lactose and to a lesser extent fucosylates glycolipids gangliosides GA1 and GM1a. This Gorilla gorilla gorilla (Western lowland gorilla) protein is Galactoside alpha-(1,2)-fucosyltransferase 1.